Reading from the N-terminus, the 276-residue chain is 1-(5-phosphoribosyl)-5-[(5-phosphoribosylamino)methylideneamino] imidazole-4-carboxamide isomerase (276 aa).

This sequence belongs to the HisA/HisF family.

It localises to the cytoplasm. It carries out the reaction 1-(5-phospho-beta-D-ribosyl)-5-[(5-phospho-beta-D-ribosylamino)methylideneamino]imidazole-4-carboxamide = 5-[(5-phospho-1-deoxy-D-ribulos-1-ylimino)methylamino]-1-(5-phospho-beta-D-ribosyl)imidazole-4-carboxamide. It functions in the pathway amino-acid biosynthesis; L-histidine biosynthesis; L-histidine from 5-phospho-alpha-D-ribose 1-diphosphate: step 4/9. The sequence is that of 1-(5-phosphoribosyl)-5-[(5-phosphoribosylamino)methylideneamino] imidazole-4-carboxamide isomerase (HIS6) from Debaryomyces hansenii (strain ATCC 36239 / CBS 767 / BCRC 21394 / JCM 1990 / NBRC 0083 / IGC 2968) (Yeast).